The sequence spans 221 residues: Ethylene-inducing xylanase 4 (221 aa).

The signal sequence occupies residues 1-19 (MVSFSTLLTACTAITGALG). A GH11 domain is found at 28 to 218 (NVTPNAQGTH…SAGRASVVVE (191 aa)). A glycan (N-linked (GlcNAc...) asparagine) is linked at asparagine 96. Glutamate 114 functions as the Nucleophile in the catalytic mechanism. Catalysis depends on glutamate 205, which acts as the Proton donor.

It belongs to the glycosyl hydrolase 11 (cellulase G) family.

It catalyses the reaction Endohydrolysis of (1-&gt;4)-beta-D-xylosidic linkages in xylans.. It functions in the pathway glycan degradation; xylan degradation. Functionally, endo-1,4-beta-xylanase involved in the hydrolysis of xylan, a major structural heterogeneous polysaccharide found in plant biomass representing the second most abundant polysaccharide in the biosphere, after cellulose. May act as an elicitor of plant defense responses in certain plants but does not exhibit any cell death when transiently expressed in N.benthamiana. This is Ethylene-inducing xylanase 4 from Verticillium dahliae (strain VdLs.17 / ATCC MYA-4575 / FGSC 10137) (Verticillium wilt).